The sequence spans 103 residues: Large ribosomal subunit protein bL21 (103 aa).

Belongs to the bacterial ribosomal protein bL21 family. As to quaternary structure, part of the 50S ribosomal subunit. Contacts protein L20.

In terms of biological role, this protein binds to 23S rRNA in the presence of protein L20. This Lactobacillus helveticus (strain DPC 4571) protein is Large ribosomal subunit protein bL21.